An 849-amino-acid chain; its full sequence is Autoinducer 1 sensor kinase/phosphatase LuxN (849 aa).

7 helical membrane passes run 9 to 29 (IVYA…MWLF), 41 to 61 (VIFG…IAWI), 160 to 180 (SYFF…LVAM), 196 to 216 (IAGI…MTYF), 220 to 242 (FSLT…YALL), 251 to 275 (YIAY…AIFI), and 283 to 301 (WLIA…QLLY). One can recognise a Histidine kinase domain in the interval 468-683 (SIAHEMRNPL…EFHLYFPVVP (216 aa)). At H471 the chain carries Phosphohistidine; by autocatalysis. The Response regulatory domain occupies 722 to 835 (TVLIVDDKEV…ALRHVLGNWL (114 aa)). D771 is subject to 4-aspartylphosphate.

Its subcellular location is the cell inner membrane. It catalyses the reaction ATP + protein L-histidine = ADP + protein N-phospho-L-histidine.. With respect to regulation, the phosphatase activity is constitutive and the kinase activity is regulated by the presence or absence of AI-1. At low cell density the kinase activity overrides the phosphatase activity. Functionally, at low cell density, in the absence of AI-1 (autoinducer 1), LuxN has a kinase activity and autophosphorylates on His-471. The phosphoryl group is then transferred on Asp-771 of the response regulator domain. The phosphoryl group is transferred to LuxU, and ultimately to LuxO. At high cell density, in the presence of AI-1, the kinase activity is inactivated, and the response regulator domain has a phosphatase activity. LuxN phosphatase acts on itself. As LuxU could function to establish an equilibrium between the aspartyl-phosphate of LuxN and the aspartyl-phosphate of LuxO, LuxU transfers phosphate from LuxO to LuxN and finally phosphate is drained from the system. The protein is Autoinducer 1 sensor kinase/phosphatase LuxN (luxN) of Vibrio campbellii (strain ATCC BAA-1116).